The sequence spans 474 residues: tRNA-2-methylthio-N(6)-dimethylallyladenosine synthase (474 aa).

The MTTase N-terminal domain occupies 3–120 (KKLHIKTWGC…LPEMINSVRG (118 aa)). [4Fe-4S] cluster-binding residues include C12, C49, C83, C157, C161, and C164. The Radical SAM core domain maps to 143 to 375 (RAEGPTAFVS…QERINQQAMA (233 aa)). A TRAM domain is found at 378–441 (RRMLGTTQRI…PNSLRGKVVR (64 aa)).

The protein belongs to the methylthiotransferase family. MiaB subfamily. In terms of assembly, monomer. The cofactor is [4Fe-4S] cluster.

The protein resides in the cytoplasm. It catalyses the reaction N(6)-dimethylallyladenosine(37) in tRNA + (sulfur carrier)-SH + AH2 + 2 S-adenosyl-L-methionine = 2-methylsulfanyl-N(6)-dimethylallyladenosine(37) in tRNA + (sulfur carrier)-H + 5'-deoxyadenosine + L-methionine + A + S-adenosyl-L-homocysteine + 2 H(+). In terms of biological role, catalyzes the methylthiolation of N6-(dimethylallyl)adenosine (i(6)A), leading to the formation of 2-methylthio-N6-(dimethylallyl)adenosine (ms(2)i(6)A) at position 37 in tRNAs that read codons beginning with uridine. The polypeptide is tRNA-2-methylthio-N(6)-dimethylallyladenosine synthase (Salmonella enteritidis PT4 (strain P125109)).